Reading from the N-terminus, the 493-residue chain is Cysteine--tRNA ligase (493 aa).

A Zn(2+)-binding site is contributed by Cys29. Residues Val31–His41 carry the 'HIGH' region motif. Residues Cys209, His234, and Glu238 each contribute to the Zn(2+) site. Positions Lys266 to Ser270 match the 'KMSKS' region motif. Lys269 lines the ATP pocket.

The protein belongs to the class-I aminoacyl-tRNA synthetase family. Monomer. The cofactor is Zn(2+).

It localises to the cytoplasm. The catalysed reaction is tRNA(Cys) + L-cysteine + ATP = L-cysteinyl-tRNA(Cys) + AMP + diphosphate. In Syntrophobacter fumaroxidans (strain DSM 10017 / MPOB), this protein is Cysteine--tRNA ligase.